The sequence spans 170 residues: Putative pre-16S rRNA nuclease (170 aa).

The protein belongs to the YqgF nuclease family.

Its subcellular location is the cytoplasm. Functionally, could be a nuclease involved in processing of the 5'-end of pre-16S rRNA. The polypeptide is Putative pre-16S rRNA nuclease (Synechococcus sp. (strain JA-2-3B'a(2-13)) (Cyanobacteria bacterium Yellowstone B-Prime)).